Here is a 306-residue protein sequence, read N- to C-terminus: VRATEKFASMYFFCHSPQSAETDVAERGNKRPVWIMGHMVNAIAQIDEFVNLGANSIETDVSFDSSANPEYTYHGVPCDCGRTCTKWEHFNEFLKGLRKATTPGDSKYHEKLVLVVFDLKTGRLYDNQASDAGKKLAKSLLQNYWNNGNNGGRAYIVLSIPNLAHYKLIAGFKEALTSEGHPELMDKVGYDFSGNDDIGDVANAYKKAGVTGHVWQSDGITNCLLRGLDRVGKAVANRDSSNGYINKVYYWTVDKRQSTRDALDAGVDGIMTNYPDVIADVLNESAYKAKFRIASYDDNPWETYKN.

Residue V1 is a signal peptide. Positions 2–27 (RATEKFASMYFFCHSPQSAETDVAER) are excised as a propeptide. H38 is a catalytic residue. Residues E58 and D60 each coordinate Mg(2+). H74 (nucleophile) is an active-site residue. Cystine bridges form between C78–C84 and C80–C223. D118 lines the Mg(2+) pocket. The N-linked (GlcNAc...) asparagine glycan is linked to N283.

This sequence belongs to the arthropod phospholipase D family. Class II subfamily. Mg(2+) serves as cofactor. Expressed by the venom gland.

Its subcellular location is the secreted. The enzyme catalyses an N-(acyl)-sphingosylphosphocholine = an N-(acyl)-sphingosyl-1,3-cyclic phosphate + choline. The catalysed reaction is an N-(acyl)-sphingosylphosphoethanolamine = an N-(acyl)-sphingosyl-1,3-cyclic phosphate + ethanolamine. It catalyses the reaction a 1-acyl-sn-glycero-3-phosphocholine = a 1-acyl-sn-glycero-2,3-cyclic phosphate + choline. It carries out the reaction a 1-acyl-sn-glycero-3-phosphoethanolamine = a 1-acyl-sn-glycero-2,3-cyclic phosphate + ethanolamine. Dermonecrotic toxins cleave the phosphodiester linkage between the phosphate and headgroup of certain phospholipids (sphingolipid and lysolipid substrates), forming an alcohol (often choline) and a cyclic phosphate. This toxin acts on sphingomyelin (SM). It may also act on ceramide phosphoethanolamine (CPE), lysophosphatidylcholine (LPC) and lysophosphatidylethanolamine (LPE), but not on lysophosphatidylserine (LPS), and lysophosphatidylglycerol (LPG). It acts by transphosphatidylation, releasing exclusively cyclic phosphate products as second products. Induces dermonecrosis, hemolysis, increased vascular permeability, edema, inflammatory response, and platelet aggregation. This chain is Dermonecrotic toxin LarSicTox-alphaIB1ai, found in Loxosceles arizonica (Arizona brown spider).